The sequence spans 397 residues: Transcription factor GATA-5 (397 aa).

Positions 48-116 (GCEPSPQPPE…SAGGRDGSAY (69 aa)) are disordered. Over residues 87 to 101 (PPGATAFPFAHSPSG) the composition is skewed to low complexity. Gly residues predominate over residues 102-112 (PGSGGSAGGRD). GATA-type zinc fingers lie at residues 189-213 (CVNC…CNAC) and 243-267 (CTNC…CNAC). Residues 281–356 (AMKKESIQTR…ASGQEDDSLA (76 aa)) form a disordered region. Over residues 289 to 298 (TRKRKPKTIA) the composition is skewed to basic residues. Residues 310–335 (ASASPSAVASTDSSAATSKAKPSLAS) are compositionally biased toward low complexity.

It is found in the nucleus. Its function is as follows. Transcription factor required during cardiovascular development. Plays an important role in the transcriptional program(s) that underlies smooth muscle cell diversity. Binds to the functionally important CEF-1 nuclear protein binding site in the cardiac-specific slow/cardiac troponin C transcriptional enhancer. In Homo sapiens (Human), this protein is Transcription factor GATA-5.